A 174-amino-acid polypeptide reads, in one-letter code: 2-C-methyl-D-erythritol 2,4-cyclodiphosphate synthase (174 aa).

D13, H15, and H61 together coordinate a divalent metal cation. 13 to 15 (DAH) provides a ligand contact to 4-CDP-2-C-methyl-D-erythritol 2-phosphate. Residues 75-77 (DIG), 149-152 (TTTD), F156, and H159 contribute to the 4-CDP-2-C-methyl-D-erythritol 2-phosphate site.

Belongs to the IspF family. As to quaternary structure, homotrimer. It depends on a divalent metal cation as a cofactor.

The catalysed reaction is 4-CDP-2-C-methyl-D-erythritol 2-phosphate = 2-C-methyl-D-erythritol 2,4-cyclic diphosphate + CMP. It functions in the pathway isoprenoid biosynthesis; isopentenyl diphosphate biosynthesis via DXP pathway; isopentenyl diphosphate from 1-deoxy-D-xylulose 5-phosphate: step 4/6. Its function is as follows. Involved in the biosynthesis of isopentenyl diphosphate (IPP) and dimethylallyl diphosphate (DMAPP), two major building blocks of isoprenoid compounds. Catalyzes the conversion of 4-diphosphocytidyl-2-C-methyl-D-erythritol 2-phosphate (CDP-ME2P) to 2-C-methyl-D-erythritol 2,4-cyclodiphosphate (ME-CPP) with a corresponding release of cytidine 5-monophosphate (CMP). The protein is 2-C-methyl-D-erythritol 2,4-cyclodiphosphate synthase of Bifidobacterium longum (strain NCC 2705).